A 219-amino-acid chain; its full sequence is Large ribosomal subunit protein uL4c (219 aa).

Positions 53 to 81 (REHTASTKTKSQVRGGGKKPWKQKGTGRA) are disordered. Positions 68–79 (GGKKPWKQKGTG) are enriched in basic residues.

The protein belongs to the universal ribosomal protein uL4 family. Part of the 50S ribosomal subunit.

The protein localises to the plastid. Its subcellular location is the chloroplast. Probably binds the 23S rRNA. The sequence is that of Large ribosomal subunit protein uL4c (rpl4) from Cyanidium caldarium (Red alga).